The sequence spans 477 residues: MSADKAVFTRRIMGIETEFGITCTHDGAQAVAPDDIARQLFRPIVDRFRSSNIYTLNGGRLYLDVGSHPEYATPECDSLNQLLIYDRAGEVTLNRLADQAEHALADQHIEGTVHLMKNNTDSLGNSYGCHENYLVGRAILLKKLGQEFIPFLITRQLICGAGHIARPHSRFSDGDTTPVYQLSQRADHVWEGVSSATTRSRPIINTRDEPHADSEMYRRLHVIVGDSSMSETTAALKIGSALLVLEMLEAGCSFDEWEIANPSKTIRDISRDLTGRAEVPLRSGRISCALEIQQAFAEKAQQWLDERPEEQHGTPNADMQRVVDLWKKVLAAIDSGDTSSIEADIDWVIKKNIIDRYQDKFGWDLTHPKLQQIDYAYHDIRPGKGIFRTLEERGRVSRWLDGADSSITDAADTPPQTTRAKMRGDFLRVAQENDADVSVDWTRLKINRPEPHDIALLDPFAAHDSRADDMISSILDR.

A Mg(2+)-binding site is contributed by Glu-16. Arg-60 provides a ligand contact to ATP. Tyr-62 contacts Mg(2+). Asp-64 serves as the catalytic Proton acceptor. A Mg(2+)-binding site is contributed by Glu-70. Positions 73 and 441 each coordinate ATP.

It belongs to the Pup ligase/Pup deamidase family. Pup-conjugating enzyme subfamily.

It catalyses the reaction ATP + [prokaryotic ubiquitin-like protein]-L-glutamate + [protein]-L-lysine = ADP + phosphate + N(6)-([prokaryotic ubiquitin-like protein]-gamma-L-glutamyl)-[protein]-L-lysine.. Its pathway is protein degradation; proteasomal Pup-dependent pathway. The protein operates within protein modification; protein pupylation. Its function is as follows. Catalyzes the covalent attachment of the prokaryotic ubiquitin-like protein modifier Pup to the proteasomal substrate proteins, thereby targeting them for proteasomal degradation. This tagging system is termed pupylation. The ligation reaction involves the side-chain carboxylate of the C-terminal glutamate of Pup and the side-chain amino group of a substrate lysine. This Corynebacterium kroppenstedtii (strain DSM 44385 / JCM 11950 / CIP 105744 / CCUG 35717) protein is Pup--protein ligase.